The sequence spans 461 residues: Argininosuccinate lyase (461 aa).

It belongs to the lyase 1 family. Argininosuccinate lyase subfamily.

The protein resides in the cytoplasm. The catalysed reaction is 2-(N(omega)-L-arginino)succinate = fumarate + L-arginine. Its pathway is amino-acid biosynthesis; L-arginine biosynthesis; L-arginine from L-ornithine and carbamoyl phosphate: step 3/3. The polypeptide is Argininosuccinate lyase (Aeromonas hydrophila subsp. hydrophila (strain ATCC 7966 / DSM 30187 / BCRC 13018 / CCUG 14551 / JCM 1027 / KCTC 2358 / NCIMB 9240 / NCTC 8049)).